The primary structure comprises 222 residues: Eukaryotic translation initiation factor 3 subunit K (222 aa).

The 163-residue stretch at Tyr46 to Lys208 folds into the PCI domain.

Belongs to the eIF-3 subunit K family. Component of the eukaryotic translation initiation factor 3 (eIF-3) complex. The eIF-3 complex interacts with pix.

The protein resides in the cytoplasm. In terms of biological role, component of the eukaryotic translation initiation factor 3 (eIF-3) complex, which is involved in protein synthesis of a specialized repertoire of mRNAs and, together with other initiation factors, stimulates binding of mRNA and methionyl-tRNAi to the 40S ribosome. The eIF-3 complex specifically targets and initiates translation of a subset of mRNAs involved in cell proliferation. This is Eukaryotic translation initiation factor 3 subunit K from Drosophila willistoni (Fruit fly).